The chain runs to 117 residues: 16 kDa protein (117 aa).

The protein is 16 kDa protein of Tobacco rattle virus (strain PLB).